Reading from the N-terminus, the 139-residue chain is General odorant-binding protein 56a (139 aa).

The N-terminal stretch at 1 to 19 is a signal peptide; it reads MNSYFVIALSALFVTLAVG. Residue Asn-23 is glycosylated (N-linked (GlcNAc...) asparagine). Disulfide bonds link Cys-39/Cys-71, Cys-67/Cys-118, and Cys-109/Cys-127.

This sequence belongs to the PBP/GOBP family. As to expression, expressed in ventral pits of larvae. In adults, it is not specifically expressed in chemosensory organs. Also expressed in stalk cells at the proximal tip of the wing disk.

It is found in the secreted. In terms of biological role, present in the aqueous fluid surrounding olfactory sensory dendrites and are thought to aid in the capture and transport of hydrophobic odorants into and through this fluid. In Drosophila melanogaster (Fruit fly), this protein is General odorant-binding protein 56a (Obp56a).